A 587-amino-acid chain; its full sequence is Phosphatidylinositol-3-phosphatase SAC1 (587 aa).

Topologically, residues 1-520 (MAATTYERLK…SPLSVPRDLK (520 aa)) are cytoplasmic. The SAC domain maps to 122 to 451 (MNHVLSMDGF…ANACAKQYAG (330 aa)). Residues 452-587 (TGALKTDFTR…PRLVQKEKID (136 aa)) form an essential for phosphatidylinositol-4-phosphate phosphatase activity region. Lys-456 carries the N6-acetyllysine modification. A helical transmembrane segment spans residues 521 to 541 (FLALPIIMVVAFSMCIICLLM). Residues 542–548 (AGDTWTE) are Lumenal-facing. Residues 549 to 569 (TLAYVLFWGVASIGTFFIILY) traverse the membrane as a helical segment. Over 570–587 (NGKDFVDAPRLVQKEKID) the chain is Cytoplasmic.

In terms of assembly, interacts with TMEM39A. Interacts with SEC23A and SEC24A; this interaction is reduced in the absence of TMEM39A. Interacts with PLEKHA3 and VAPA and/or VAPB to form a ternary complex.

It localises to the endoplasmic reticulum membrane. The protein resides in the golgi apparatus membrane. The enzyme catalyses a 1,2-diacyl-sn-glycero-3-phospho-(1D-myo-inositol-3-phosphate) + H2O = a 1,2-diacyl-sn-glycero-3-phospho-(1D-myo-inositol) + phosphate. The catalysed reaction is a 1,2-diacyl-sn-glycero-3-phospho-(1D-myo-inositol 4-phosphate) + H2O = a 1,2-diacyl-sn-glycero-3-phospho-(1D-myo-inositol) + phosphate. In terms of biological role, phosphoinositide phosphatase which catalyzes the hydrolysis of phosphatidylinositol 4-phosphate (PtdIns(4)P), phosphatidylinositol 3-phosphate (PtdIns(3)P) and has low activity towards phosphatidylinositol-3,5-bisphosphate (PtdIns(3,5)P2). Shows a very robust PtdIns(4)P phosphatase activity when it binds PtdIns(4)P in a 'cis' configuration in the cellular environment, with much less activity seen when it binds PtdIns(4)P in 'trans' configuration. PtdIns(4)P phosphatase activity (when it binds PtdIns(4)P in 'trans' configuration) is enhanced in the presence of PLEKHA3. The protein is Phosphatidylinositol-3-phosphatase SAC1 (SACM1L) of Bos taurus (Bovine).